We begin with the raw amino-acid sequence, 208 residues long: MLVAIEGIDGAGKTTLARSLALKLRGVGLETVVSKEPTNGPWGMLLRQSAATGRFSPEEEVDVLLRDRRQHVEDLIVPMIGRGAVVILDRYFPSMVAYQGAAGLPVDALLEANAFAPRPDVLLLLDVPPAIGLQRIWERGSTPNHFETTENLSRCRDIFLALELPSKRVIDATANAETVLSAALALVMEVLRVRLGALGAVVLRRLAG.

7–14 (GIDGAGKT) lines the ATP pocket.

This sequence belongs to the thymidylate kinase family.

The enzyme catalyses dTMP + ATP = dTDP + ADP. Phosphorylation of dTMP to form dTDP in both de novo and salvage pathways of dTTP synthesis. The sequence is that of Thymidylate kinase (tmk) from Xylella fastidiosa (strain 9a5c).